Here is a 452-residue protein sequence, read N- to C-terminus: Lichenan permease IIC component (452 aa).

The region spanning 8 to 421 is the PTS EIIC type-3 domain; the sequence is LEEKVMPIAG…AVSFVVYYPF (414 aa). 10 helical membrane passes run 31–51, 72–92, 104–124, 138–158, 187–207, 218–238, 246–266, 291–311, 351–373, and 402–422; these read GIIL…IGNL, LAYP…FGIA, LSAG…QVPF, GIPL…IAMV, FVAL…RLIV, IVSV…GGSL, LLWA…APIW, FFDI…VVTM, LLLP…MSTG, and SGAV…YPFF.

The protein localises to the cell membrane. Its function is as follows. The phosphoenolpyruvate-dependent sugar phosphotransferase system (PTS), a major carbohydrate active -transport system, catalyzes the phosphorylation of incoming sugar substrates concomitant with their translocation across the cell membrane. This system is involved in lichenan transport. In Bacillus subtilis (strain 168), this protein is Lichenan permease IIC component (licC).